Consider the following 168-residue polypeptide: Putative ankyrin repeat protein RBE_1411 (168 aa).

ANK repeat units lie at residues 59–88, 98–127, and 131–160; these read TIFS…LQHK, YGDT…DLTI, and KGET…ILGN.

This Rickettsia bellii (strain RML369-C) protein is Putative ankyrin repeat protein RBE_1411.